Reading from the N-terminus, the 117-residue chain is Large ribosomal subunit protein uL22 (117 aa).

The protein belongs to the universal ribosomal protein uL22 family. As to quaternary structure, part of the 50S ribosomal subunit.

In terms of biological role, this protein binds specifically to 23S rRNA; its binding is stimulated by other ribosomal proteins, e.g. L4, L17, and L20. It is important during the early stages of 50S assembly. It makes multiple contacts with different domains of the 23S rRNA in the assembled 50S subunit and ribosome. Functionally, the globular domain of the protein is located near the polypeptide exit tunnel on the outside of the subunit, while an extended beta-hairpin is found that lines the wall of the exit tunnel in the center of the 70S ribosome. This Leptospira biflexa serovar Patoc (strain Patoc 1 / ATCC 23582 / Paris) protein is Large ribosomal subunit protein uL22.